The following is a 301-amino-acid chain: Probable alpha-L-glutamate ligase 1 (301 aa).

An ATP-grasp domain is found at 104-287; sequence LQLLSRKNIG…VAEKIIQFIE (184 aa). Residues lysine 141, 178–179, aspartate 187, and 211–213 each bind ATP; these read EY and RSN. Aspartate 248, glutamate 260, and asparagine 262 together coordinate Mg(2+). The Mn(2+) site is built by aspartate 248, glutamate 260, and asparagine 262.

This sequence belongs to the RimK family. It depends on Mg(2+) as a cofactor. The cofactor is Mn(2+).

The sequence is that of Probable alpha-L-glutamate ligase 1 from Shewanella frigidimarina (strain NCIMB 400).